A 169-amino-acid chain; its full sequence is Peptide methionine sulfoxide reductase MsrA (169 aa).

Residue C10 is part of the active site.

This sequence belongs to the MsrA Met sulfoxide reductase family.

The catalysed reaction is L-methionyl-[protein] + [thioredoxin]-disulfide + H2O = L-methionyl-(S)-S-oxide-[protein] + [thioredoxin]-dithiol. It catalyses the reaction [thioredoxin]-disulfide + L-methionine + H2O = L-methionine (S)-S-oxide + [thioredoxin]-dithiol. In terms of biological role, has an important function as a repair enzyme for proteins that have been inactivated by oxidation. Catalyzes the reversible oxidation-reduction of methionine sulfoxide in proteins to methionine. This is Peptide methionine sulfoxide reductase MsrA from Streptococcus agalactiae serotype III (strain NEM316).